We begin with the raw amino-acid sequence, 356 residues long: GTPase Obg (356 aa).

In terms of domain architecture, Obg spans 1-159 (MKFLDEAKVY…RWIWLRMKLI (159 aa)). Residues 160–327 (ADAGLVGLPN…VLRALTDVIS (168 aa)) enclose the OBG-type G domain. Residues 166–173 (GLPNAGKS), 191–195 (FTTLH), 212–215 (DIPG), 279–282 (NKID), and 308–310 (SGV) contribute to the GTP site. Residues Ser173 and Thr193 each contribute to the Mg(2+) site. The segment at 329-356 (APVSTKAKGEPTENETPPPSTGWSPLSN) is disordered.

This sequence belongs to the TRAFAC class OBG-HflX-like GTPase superfamily. OBG GTPase family. In terms of assembly, monomer. Requires Mg(2+) as cofactor.

The protein resides in the cytoplasm. Functionally, an essential GTPase which binds GTP, GDP and possibly (p)ppGpp with moderate affinity, with high nucleotide exchange rates and a fairly low GTP hydrolysis rate. Plays a role in control of the cell cycle, stress response, ribosome biogenesis and in those bacteria that undergo differentiation, in morphogenesis control. This chain is GTPase Obg, found in Afipia carboxidovorans (strain ATCC 49405 / DSM 1227 / KCTC 32145 / OM5) (Oligotropha carboxidovorans).